The sequence spans 206 residues: Cytidylate kinase (206 aa).

Residue 7–15 (GPAASGKGT) participates in ATP binding.

Belongs to the cytidylate kinase family. Type 1 subfamily.

It localises to the cytoplasm. The catalysed reaction is CMP + ATP = CDP + ADP. The enzyme catalyses dCMP + ATP = dCDP + ADP. The chain is Cytidylate kinase from Azorhizobium caulinodans (strain ATCC 43989 / DSM 5975 / JCM 20966 / LMG 6465 / NBRC 14845 / NCIMB 13405 / ORS 571).